The following is a 1279-amino-acid chain: Maestro heat-like repeat-containing protein family member 7 (1279 aa).

The segment at 1 to 145 (MALSRGTSLI…NSSRPCSEDV (145 aa)) is disordered. The span at 39–61 (PDLALAPPPEHALALTPALHPAL) shows a compositional bias: low complexity. Polar residues-rich tracts occupy residues 71–106 (PVSNDIPSHNASGATTPSSTQINTVDTADQGLNHTS) and 124–140 (PSSTQANVLSPENSSRP). Asparagine 200, asparagine 210, asparagine 255, asparagine 267, and asparagine 296 each carry an N-linked (GlcNAc...) asparagine glycan. Serine 356 carries the phosphoserine modification. N-linked (GlcNAc...) asparagine glycosylation occurs at asparagine 541. 2 helical membrane-spanning segments follow: residues 548–568 (TLVTLPFLISSGFPTLGLLLG) and 722–742 (LLPISFLASSFMTEVVVALLM). HEAT repeat units follow at residues 913–950 (QELCRILYLLIPLLERGDERHKITATAFFVELFRMEQV), 992–1029 (AKVQSLLPSMVKSLKNMDGMLVVEAVHDLKRIFKGQGK), 1035–1072 (AVYVEMLQILLPHFTDAREMVRASCINVYGKVVKKLQT), and 1080–1117 (EQLTSTLMPLLFIIQEGNAKVSQKCVKTLVCCSSFMNW).

The protein resides in the membrane. The chain is Maestro heat-like repeat-containing protein family member 7 (Mroh7) from Mus musculus (Mouse).